The following is a 78-amino-acid chain: MSRVCQVTGKGPVTGNNISHANNKTRRRFLPNLQHHRFWVESEKRFVRLRVSAKGMRIIDKRGIDVVLAELRARGEKV.

A disordered region spans residues 1–20; that stretch reads MSRVCQVTGKGPVTGNNISH.

Belongs to the bacterial ribosomal protein bL28 family.

In Azotobacter vinelandii (strain DJ / ATCC BAA-1303), this protein is Large ribosomal subunit protein bL28.